The primary structure comprises 31 residues: Cytochrome b6-f complex subunit 6 (31 aa).

The chain crosses the membrane as a helical span at residues Ile4–Gly24.

This sequence belongs to the PetL family. In terms of assembly, the 4 large subunits of the cytochrome b6-f complex are cytochrome b6, subunit IV (17 kDa polypeptide, PetD), cytochrome f and the Rieske protein, while the 4 small subunits are PetG, PetL, PetM and PetN. The complex functions as a dimer.

The protein localises to the plastid. It is found in the chloroplast thylakoid membrane. In terms of biological role, component of the cytochrome b6-f complex, which mediates electron transfer between photosystem II (PSII) and photosystem I (PSI), cyclic electron flow around PSI, and state transitions. PetL is important for photoautotrophic growth as well as for electron transfer efficiency and stability of the cytochrome b6-f complex. This is Cytochrome b6-f complex subunit 6 from Oenothera elata subsp. hookeri (Hooker's evening primrose).